An 807-amino-acid chain; its full sequence is AP-5 complex subunit zeta-1 (807 aa).

Probably part of the adaptor protein complex 5 (AP-5) a tetramer composed of AP5B1, AP5M1, AP5S1 and AP5Z1. Interacts with ZFYVE26 and SPG11.

It is found in the cytoplasm. The protein localises to the nucleus. Functionally, as part of AP-5, a probable fifth adaptor protein complex it may be involved in endosomal transport. This chain is AP-5 complex subunit zeta-1 (Ap5z1), found in Mus musculus (Mouse).